Reading from the N-terminus, the 515-residue chain is Maturase K (515 aa).

The protein belongs to the intron maturase 2 family. MatK subfamily.

The protein resides in the plastid. The protein localises to the chloroplast. Usually encoded in the trnK tRNA gene intron. Probably assists in splicing its own and other chloroplast group II introns. The polypeptide is Maturase K (Pinus coulteri (Coulter pine)).